The sequence spans 188 residues: Cytochrome c oxidase assembly protein CtaG (188 aa).

At 1–8 (MSKKSNKN) the chain is on the cytoplasmic side. The chain crosses the membrane as a helical; Signal-anchor for type II membrane protein span at residues 9–31 (LAFSLLGLIISMVLLSFASVPIY). Residues 32 to 188 (NLFCKVTGYG…SSLRGNYVSN (157 aa)) are Periplasmic-facing.

This sequence belongs to the COX11/CtaG family.

Its subcellular location is the cell inner membrane. Its function is as follows. Exerts its effect at some terminal stage of cytochrome c oxidase synthesis, probably by being involved in the insertion of the copper B into subunit I. This Rickettsia conorii (strain ATCC VR-613 / Malish 7) protein is Cytochrome c oxidase assembly protein CtaG.